We begin with the raw amino-acid sequence, 603 residues long: Probable GMP synthase [glutamine-hydrolyzing] (603 aa).

The 190-residue stretch at 6-195 folds into the Glutamine amidotransferase type-1 domain; that stretch reads KIAVVDFGGQ…FIQICGVSKT (190 aa). Cysteine 81 acts as the Nucleophile in catalysis. Active-site residues include histidine 170 and glutamate 172. Positions 196–392 constitute a GMPS ATP-PPase domain; sequence WGIDQFLKEK…LGLESEWVGR (197 aa). Residue 224 to 230 participates in ATP binding; that stretch reads SGGVDST.

Homodimer.

It carries out the reaction XMP + L-glutamine + ATP + H2O = GMP + L-glutamate + AMP + diphosphate + 2 H(+). The protein operates within purine metabolism; GMP biosynthesis; GMP from XMP (L-Gln route): step 1/1. In terms of biological role, catalyzes the synthesis of GMP from XMP. The polypeptide is Probable GMP synthase [glutamine-hydrolyzing] (guaA) (Leptospira interrogans serogroup Icterohaemorrhagiae serovar copenhageni (strain Fiocruz L1-130)).